Here is a 99-residue protein sequence, read N- to C-terminus: SAGA-associated factor 11 (99 aa).

An SGF11-type zinc finger spans residues 71 to 92 (IHCENCGRDVSANRLAAHLQRC).

Belongs to the SGF11 family. Component of the 1.8 MDa SAGA transcription coactivator-HAT complex. SAGA is built of 5 distinct domains with specialized functions. Within the SAGA complex, SUS1, SGF11, SGF73 and UBP8 form an additional subcomplex of SAGA called the DUB module (deubiquitination module). Interacts directly with SGF73, SUS1 and UBP8.

It is found in the nucleus. Functionally, functions as a component of the transcription regulatory histone acetylation (HAT) complex SAGA. At the promoters, SAGA is required for recruitment of the basal transcription machinery. It influences RNA polymerase II transcriptional activity through different activities such as TBP interaction and promoter selectivity, interaction with transcription activators, and chromatin modification through histone acetylation and deubiquitination. SAGA acetylates nucleosomal histone H3 to some extent (to form H3K9ac, H3K14ac, H3K18ac and H3K23ac). SAGA interacts with DNA via upstream activating sequences (UASs). Involved in transcriptional regulation of a subset of SAGA-regulated genes. Within the SAGA complex, participates in a subcomplex, that specifically deubiquitinates histones H2B. The protein is SAGA-associated factor 11 of Saccharomyces cerevisiae (strain YJM789) (Baker's yeast).